Consider the following 278-residue polypeptide: Rhomboid protease GlpG (278 aa).

Transmembrane regions (helical) follow at residues 94–114 (AGPLTLSVMVLCIAIYILMLI), 143–163 (AFLHFSLLHILFNLMWWWYLG), 175–195 (LLVLTIVSAVFSGWGQSLFSG), 196–216 (ANFGGLSGVVYALMGYVWLTG), 224–241 (ISLPRGLMAFSVLWLIAG), and 245–267 (ILGLSIANAAHVSGLIIGLLMAF). The active-site Nucleophile is the S202. H255 is a catalytic residue.

The protein belongs to the peptidase S54 family.

The protein resides in the cell inner membrane. The enzyme catalyses Cleaves type-1 transmembrane domains using a catalytic dyad composed of serine and histidine that are contributed by different transmembrane domains.. Rhomboid-type serine protease that catalyzes intramembrane proteolysis. This is Rhomboid protease GlpG from Yersinia pestis bv. Antiqua (strain Antiqua).